The chain runs to 66 residues: DNA gyrase inhibitor YacG (66 aa).

Zn(2+) contacts are provided by Cys-10, Cys-13, Cys-29, and Cys-33.

The protein belongs to the DNA gyrase inhibitor YacG family. Interacts with GyrB. Requires Zn(2+) as cofactor.

In terms of biological role, inhibits all the catalytic activities of DNA gyrase by preventing its interaction with DNA. Acts by binding directly to the C-terminal domain of GyrB, which probably disrupts DNA binding by the gyrase. The sequence is that of DNA gyrase inhibitor YacG from Edwardsiella ictaluri (strain 93-146).